The chain runs to 37 residues: Potassium channel toxin alpha-KTx 1.4 (37 aa).

Intrachain disulfides connect C7/C28, C13/C33, and C17/C35.

The protein belongs to the short scorpion toxin superfamily. Potassium channel inhibitor family. Alpha-KTx 01 subfamily. In terms of tissue distribution, expressed by the venom gland.

The protein localises to the secreted. Blocks selectively the high conductance calcium-activated (maxi-K) potassium channels. The sequence is that of Potassium channel toxin alpha-KTx 1.4 from Centruroides limbatus (Bark scorpion).